Consider the following 112-residue polypeptide: Putative pterin-4-alpha-carbinolamine dehydratase (112 aa).

Belongs to the pterin-4-alpha-carbinolamine dehydratase family.

It catalyses the reaction (4aS,6R)-4a-hydroxy-L-erythro-5,6,7,8-tetrahydrobiopterin = (6R)-L-erythro-6,7-dihydrobiopterin + H2O. This chain is Putative pterin-4-alpha-carbinolamine dehydratase, found in Shewanella denitrificans (strain OS217 / ATCC BAA-1090 / DSM 15013).